A 96-amino-acid chain; its full sequence is Small ribosomal subunit protein uS17 (96 aa).

The protein belongs to the universal ribosomal protein uS17 family. As to quaternary structure, part of the 30S ribosomal subunit.

One of the primary rRNA binding proteins, it binds specifically to the 5'-end of 16S ribosomal RNA. The chain is Small ribosomal subunit protein uS17 from Deinococcus radiodurans (strain ATCC 13939 / DSM 20539 / JCM 16871 / CCUG 27074 / LMG 4051 / NBRC 15346 / NCIMB 9279 / VKM B-1422 / R1).